The sequence spans 644 residues: Ribonuclease R (644 aa).

The RNB domain maps to 211 to 529 (RINYSHIPFI…LHRLLKELLF (319 aa)). The S1 motif domain maps to 573-644 (LELLEKEFLG…ITERIKEHVS (72 aa)).

This sequence belongs to the RNR ribonuclease family. RNase R subfamily.

It is found in the cytoplasm. The enzyme catalyses Exonucleolytic cleavage in the 3'- to 5'-direction to yield nucleoside 5'-phosphates.. Functionally, 3'-5' exoribonuclease that releases 5'-nucleoside monophosphates and is involved in maturation of structured RNAs. This is Ribonuclease R from Helicobacter pylori (strain ATCC 700392 / 26695) (Campylobacter pylori).